The chain runs to 223 residues: Deoxyribose-phosphate aldolase (223 aa).

The active-site Proton donor/acceptor is the Asp91. The Schiff-base intermediate with acetaldehyde role is filled by Lys153. The Proton donor/acceptor role is filled by Lys182.

Belongs to the DeoC/FbaB aldolase family. DeoC type 1 subfamily.

It localises to the cytoplasm. The enzyme catalyses 2-deoxy-D-ribose 5-phosphate = D-glyceraldehyde 3-phosphate + acetaldehyde. The protein operates within carbohydrate degradation; 2-deoxy-D-ribose 1-phosphate degradation; D-glyceraldehyde 3-phosphate and acetaldehyde from 2-deoxy-alpha-D-ribose 1-phosphate: step 2/2. In terms of biological role, catalyzes a reversible aldol reaction between acetaldehyde and D-glyceraldehyde 3-phosphate to generate 2-deoxy-D-ribose 5-phosphate. The chain is Deoxyribose-phosphate aldolase from Streptococcus pyogenes serotype M4 (strain MGAS10750).